A 1704-amino-acid polypeptide reads, in one-letter code: Phospholipid-transporting ATPase ABCA3 (1704 aa).

N-linked (GlcNAc...) asparagine glycosylation is present at asparagine 14. A helical membrane pass occupies residues 22–42 (VLVTVLELFLPLLFSGILIWL). 4 N-linked (GlcNAc...) asparagine glycosylation sites follow: asparagine 53, asparagine 124, asparagine 140, and asparagine 228. 5 consecutive transmembrane segments (helical) span residues 251–271 (ISDP…MLSF), 307–327 (AWFL…TLLF), 344–364 (SLVL…SFMV), 373–393 (MAAT…FFVA), and 405–425 (LLSC…IGKF). One can recognise an ABC transporter 1 domain in the interval 530–763 (IKIKHLSKVF…YGAGYHMTLV (234 aa)). 566–573 (GHNGAGKT) is an ATP binding site. N-linked (GlcNAc...) asparagine glycans are attached at residues asparagine 620 and asparagine 945. Transmembrane regions (helical) follow at residues 1100 to 1120 (IALN…ILAV), 1144 to 1164 (SALL…LVVF), 1183 to 1203 (LLLM…SFFF), 1213 to 1233 (LTIF…IMRI), 1245 to 1265 (LDHV…SNFY), and 1310 to 1330 (MAAS…NLLW). An N-linked (GlcNAc...) asparagine glycan is attached at asparagine 1350. The ABC transporter 2 domain occupies 1381 to 1614 (LIINELSKVY…FGSGYSLQAK (234 aa)). 1416–1423 (GFNGAGKT) lines the ATP pocket.

In terms of assembly, homooligomer; disulfide-linked. N-glycosylated. Localization at intracellular vesicles is accompanied by processing of oligosaccharide from high mannose type to complex type. N-linked glycosylation at Asn-124 and Asn-140 is required for stability and efficient anterograde trafficking and prevents from proteasomal degradation. In terms of processing, proteolytically cleaved by CTSL and to a lower extent by CTSB within multivesicular bodies (MVB) and lamellar bodies (LB) leading to a mature form of 150 kDa. In terms of tissue distribution, highly expressed in lung, moderately expressed in stomach, intestine, and kidney and weakly expressed in thyroid, brain, liver, spleen, heart, testis, and thymus.

The protein localises to the endosome. It localises to the multivesicular body membrane. Its subcellular location is the cytoplasmic vesicle membrane. The protein resides in the late endosome membrane. It is found in the lysosome membrane. The catalysed reaction is ATP + H2O + xenobioticSide 1 = ADP + phosphate + xenobioticSide 2.. The enzyme catalyses a 1,2-diacyl-sn-glycero-3-phosphocholine(in) + ATP + H2O = a 1,2-diacyl-sn-glycero-3-phosphocholine(out) + ADP + phosphate + H(+). It carries out the reaction ATP + H2O + phospholipidSide 1 = ADP + phosphate + phospholipidSide 2.. It catalyses the reaction 1,2-dihexadecanoyl-sn-glycero-3-phosphocholine(in) + ATP + H2O = 1,2-dihexadecanoyl-sn-glycero-3-phosphocholine(out) + ADP + phosphate + H(+). The catalysed reaction is cholesterol(in) + ATP + H2O = cholesterol(out) + ADP + phosphate + H(+). The enzyme catalyses a 1,2-diacyl-sn-glycero-3-phospho-(1'-sn-glycerol)(in) + ATP + H2O = a 1,2-diacyl-sn-glycero-3-phospho-(1'-sn-glycerol)(out) + ADP + phosphate + H(+). Its function is as follows. Catalyzes the ATP-dependent transport of phospholipids such as phosphatidylcholine and phosphoglycerol from the cytoplasm into the lumen side of lamellar bodies, in turn participates in the lamellar bodies biogenesis and homeostasis of pulmonary surfactant. Transports preferentially phosphatidylcholine containing short acyl chains. In addition plays a role as an efflux transporter of miltefosine across macrophage membranes and free cholesterol (FC) through intralumenal vesicles by removing FC from the cell as a component of surfactant and protects cells from free cholesterol toxicity. This chain is Phospholipid-transporting ATPase ABCA3, found in Rattus norvegicus (Rat).